Here is a 119-residue protein sequence, read N- to C-terminus: Small polypeptide DEVIL 24 (119 aa).

The required for DVL/RTFL small polypeptide activity stretch occupies residues 83-114; the sequence is SFTSKCTSLMKQQHARLCIIRLCATMLLRSYT. Residues 96 to 113 traverse the membrane as a helical segment; the sequence is HARLCIIRLCATMLLRSY.

It belongs to the DVL/RTFL small polypeptides family.

The protein resides in the cell membrane. Functionally, small polypeptide acting as a regulatory molecule which coordinates cellular responses required for differentiation, growth and development, probably by restricting polar cell proliferation in lateral organs and coordinating socket cell recruitment and differentiation at trichome sites. The chain is Small polypeptide DEVIL 24 from Arabidopsis thaliana (Mouse-ear cress).